The chain runs to 289 residues: MTGREILHKMKESVKEKVGLGASASSADSGKGKSKMLKQITHGFHLVKGKAFHEMEDYVVAKFKEVDDNELGLFAIFDGHLSHEIPDYLCSHLFENILKEPNFWQEPEKAIKKAYYITDTTILDKADDLGKGGSTAVTAILINCQKLVVANVGDSRAVICQNGVAKPLSVDHEPNMEKDEIENRGGFVSNFPGDVPRVDGQLAVARAFGDKSLKMHLSSEPYVTVEIIDDDAEFLILASDGLWKVMSNQEAVDSIKGIKDAKAAAKHLAEEAVARKSSDDISVVVVKFQ.

One can recognise a PPM-type phosphatase domain in the interval 41 to 288 (THGFHLVKGK…DDISVVVVKF (248 aa)). Mn(2+)-binding residues include D78, G79, D240, and D279.

This sequence belongs to the PP2C family. Mg(2+) serves as cofactor. Mn(2+) is required as a cofactor.

It carries out the reaction O-phospho-L-seryl-[protein] + H2O = L-seryl-[protein] + phosphate. The enzyme catalyses O-phospho-L-threonyl-[protein] + H2O = L-threonyl-[protein] + phosphate. The sequence is that of Probable protein phosphatase 2C 39 from Arabidopsis thaliana (Mouse-ear cress).